The primary structure comprises 270 residues: tRNA pseudouridine synthase A (270 aa).

The Nucleophile role is filled by Asp-55. Residue Tyr-110 coordinates substrate.

The protein belongs to the tRNA pseudouridine synthase TruA family.

The enzyme catalyses uridine(38/39/40) in tRNA = pseudouridine(38/39/40) in tRNA. Functionally, formation of pseudouridine at positions 38, 39 and 40 in the anticodon stem and loop of transfer RNAs. The polypeptide is tRNA pseudouridine synthase A (Methanoculleus marisnigri (strain ATCC 35101 / DSM 1498 / JR1)).